Consider the following 1136-residue polypeptide: Probable LRR receptor-like serine/threonine-protein kinase At4g36180 (1136 aa).

The first 22 residues, 1 to 22 (MAMDISLFFIFLVIYAPLVSYA), serve as a signal peptide directing secretion. The Extracellular portion of the chain corresponds to 23–751 (DESQAEIDAL…TAEGKKKKRK (729 aa)). LRR repeat units follow at residues 93 to 115 (MLRKLSLRSNSFNGTIPTSLAYC), 117 to 139 (RLLSVFLQYNSLSGKLPPAMRNL), 141 to 162 (SLEVFNVAGNRLSGEIPVGLPS), 163 to 186 (SLQFLDISSNTFSGQIPSGLANLT), 187 to 210 (QLQLLNLSYNQLTGEIPASLGNLQ), 211 to 233 (SLQYLWLDFNLLQGTLPSAISNC), 235 to 256 (SLVHLSASENEIGGVIPAAYGA), and 259 to 280 (KLEVLSLSNNNFSGTVPFSLFC). 2 N-linked (GlcNAc...) asparagine glycosylation sites follow: asparagine 105 and asparagine 138. Residues asparagine 184, asparagine 192, and asparagine 232 are each glycosylated (N-linked (GlcNAc...) asparagine). N-linked (GlcNAc...) asparagine glycosylation is found at asparagine 269 and asparagine 281. 18 LRR repeats span residues 283 to 304 (SLTIVQLGFNAFSDIVRPETTA), 309 to 330 (GLQVLDLQENRISGRFPLWLTN), 333 to 355 (SLKNLDVSGNLFSGEIPPDIGNL), 357 to 379 (RLEELKLANNSLTGEIPVEIKQC), 381 to 403 (SLDVLDFEGNSLKGQIPEFLGYM), 405 to 426 (ALKVLSLGRNSFSGYVPSSMVN), 429 to 452 (QLERLNLGENNLNGSFPVELMALT), 453 to 479 (SLSELDLSGNRFSGAVPVSISNLSNLS), 480 to 500 (FLNLSGNGFSGEIPASVGNLF), 501 to 524 (KLTALDLSKQNMSGEVPVELSGLP), 525 to 546 (NVQVIALQGNNFSGVVPEGFSS), 549 to 571 (SLRYVNLSSNSFSGEIPQTFGFL), 573 to 595 (LLVSLSLSDNHISGSIPPEIGNC), 597 to 620 (ALEVLELRSNRLMGHIPADLSRLP), 621 to 643 (RLKVLDLGQNNLSGEIPPEISQS), 645 to 666 (SLNSLSLDHNHLSGVIPGSFSG), 669 to 691 (NLTKMDLSVNNLTGEIPASLALI), and 694 to 716 (NLVYFNVSSNNLKGEIPASLGSR). Asparagine 365 is a glycosylation site (N-linked (GlcNAc...) asparagine). N-linked (GlcNAc...) asparagine glycosylation is found at asparagine 441, asparagine 474, asparagine 477, asparagine 482, asparagine 511, asparagine 535, asparagine 554, and asparagine 594. Asparagine 631 carries N-linked (GlcNAc...) asparagine glycosylation. 4 N-linked (GlcNAc...) asparagine glycosylation sites follow: asparagine 669, asparagine 679, asparagine 699, and asparagine 719. A helical membrane pass occupies residues 752–772 (MILMIVMAAIGAFLLSLFCCF). At 773-1136 (YVYTLLKWRK…ADPTSQPSPA (364 aa)) the chain is on the cytoplasmic side. The disordered stretch occupies residues 786-819 (QQSTTGEKKRSPGRTSAGSRVRSSTSRSSTENGE). Residues 799–815 (RTSAGSRVRSSTSRSST) are compositionally biased toward low complexity. 2 positions are modified to phosphothreonine: threonine 830 and threonine 838. The 283-residue stretch at 841-1123 (FDEENVLSRT…LEGCRVGPDV (283 aa)) folds into the Protein kinase domain. Tyrosine 915 and tyrosine 1010 each carry phosphotyrosine.

It belongs to the protein kinase superfamily. Ser/Thr protein kinase family.

It localises to the cell membrane. The catalysed reaction is L-seryl-[protein] + ATP = O-phospho-L-seryl-[protein] + ADP + H(+). It catalyses the reaction L-threonyl-[protein] + ATP = O-phospho-L-threonyl-[protein] + ADP + H(+). The sequence is that of Probable LRR receptor-like serine/threonine-protein kinase At4g36180 from Arabidopsis thaliana (Mouse-ear cress).